Here is a 445-residue protein sequence, read N- to C-terminus: Tryptophan 5-hydroxylase 1 (445 aa).

Residues 19-94 (AIIFSLKNEV…SIVSMNPTEH (76 aa)) enclose the ACT domain. Ser-58 is modified (phosphoserine; by PKA). Residues Tyr-236, Arg-258, and Thr-266 each coordinate L-tryptophan. Fe cation-binding residues include His-273, His-278, and Glu-318. The L-tryptophan site is built by Ser-337 and Ile-367.

It belongs to the biopterin-dependent aromatic amino acid hydroxylase family. Homotetramer. Fe(2+) is required as a cofactor.

It catalyses the reaction (6R)-L-erythro-5,6,7,8-tetrahydrobiopterin + L-tryptophan + O2 = 5-hydroxy-L-tryptophan + (4aS,6R)-4a-hydroxy-L-erythro-5,6,7,8-tetrahydrobiopterin. Its pathway is aromatic compound metabolism; serotonin biosynthesis; serotonin from L-tryptophan: step 1/2. Oxidizes L-tryptophan to 5-hydroxy-l-tryptophan in the rate-determining step of serotonin biosynthesis. The chain is Tryptophan 5-hydroxylase 1 (TPH1) from Gallus gallus (Chicken).